The following is a 258-amino-acid chain: (S)-hydroxynitrile lyase (258 aa).

Residues 5 to 242 (HFVLIHTICH…GGDHKLQLTK (238 aa)) enclose the AB hydrolase-1 domain. 2-hydroxy-2-methylpropanenitrile-binding residues include Thr11 and Ser80. Thr11, Ser80, and Cys81 together coordinate acetone. Ser80 functions as the Proton donor/acceptor in the catalytic mechanism. His236 functions as the Proton donor/acceptor in the catalytic mechanism.

The protein belongs to the AB hydrolase superfamily. Hydroxynitrile lyase family. In terms of assembly, homotetramer.

It carries out the reaction a monosubstituted aliphatic (S)-hydroxynitrile = an aldehyde + hydrogen cyanide. The enzyme catalyses a disubstituted aliphatic (S)-hydroxynitrile = a ketone + hydrogen cyanide. It catalyses the reaction an aromatic (S)-hydroxynitrile = an aromatic aldehyde + hydrogen cyanide. The catalysed reaction is 2-hydroxy-2-methylpropanenitrile = acetone + hydrogen cyanide. It carries out the reaction butan-2-one + hydrogen cyanide = 2-hydroxy-2-methylbutanenitrile. The enzyme catalyses pentan-2-one + hydrogen cyanide = (2S)-2-hydroxy-2-methylpentanenitrile. It catalyses the reaction hexan-2-one + hydrogen cyanide = (2S)-2-hydroxy-2-methylhexanenitrile. The catalysed reaction is heptan-2-one + hydrogen cyanide = (2S)-2-hydroxy-2-methylheptanenitrile. It carries out the reaction 4-methylpentan-2-one + hydrogen cyanide = (2S)-2-hydroxy-2,4-dimethylpentanenitrile. The enzyme catalyses 3,3-dimethylbutan-2-one + hydrogen cyanide = (2S)-2-hydroxy-2-methyl-3,3-dimethylbutanenitrile. It catalyses the reaction acetophenone + hydrogen cyanide = (2S)-2-hydroxy-2-phenylpropanenitrile. The catalysed reaction is propanal + hydrogen cyanide = (2S)-2-hydroxybutanenitrile. It carries out the reaction pentanal + hydrogen cyanide = (2S)-2-hydroxyhexanenitrile. The enzyme catalyses 2-methylpropanal + hydrogen cyanide = (2S)-2-hydroxy-3-methylbutanenitrile. It catalyses the reaction 2,2-dimethylpropanal + hydrogen cyanide = (2S)-2-hydroxy-3,3-dimethylbutanenitrile. The catalysed reaction is acrolein + hydrogen cyanide = (2S)-2-hydroxybut-3-enenitrile. It carries out the reaction (2E)-but-2-enal + hydrogen cyanide = (2S,3E)-2-hydroxypent-3-enenitrile. The enzyme catalyses (E)-hex-2-enal + hydrogen cyanide = (2S,3E)-2-hydroxyhept-3-enenitrile. It catalyses the reaction cyclohexanecarbaldehyde + hydrogen cyanide = (2S)-2-cyclohexyl-2-hydroxyacetonitrile. The catalysed reaction is benzaldehyde + hydrogen cyanide = (S)-mandelonitrile. It carries out the reaction 4-methoxybenzaldehyde + hydrogen cyanide = (2S)-2-hydroxy-2-(4-methoxyphenyl)acetonitrile. The enzyme catalyses piperonal + hydrogen cyanide = (2S)-2-(2H-1,3-benzodioxol-5-yl)-2-hydroxyacetonitrile. It catalyses the reaction formylthiophene + hydrogen cyanide = (2R)-2-hydroxy-2-(thiophen-2-yl)acetonitrile. The catalysed reaction is 3-formylthiophene + hydrogen cyanide = (2S)-2-hydroxy-2-(thiophen-3-yl)acetonitrile. It carries out the reaction furan-3-carbaldehyde + hydrogen cyanide = (2S)-2-(furan-3-yl)-2-hydroxyacetonitrile. Its function is as follows. Involved in cyanogenesis, the release of HCN from cyanogenic glycosides in injured tissues; the release of toxic HCN is believed to play a central role in the defense mechanism of plants against herbivores and microbial attack. Decomposes a variety of cyanohydrins (alpha-hydroxynitriles) into HCN and the corresponding aldehydes or ketones; two natural substrates are 2-hydroxy-2-methylpropanenitrile (acetone cyanohydrin) and 2-hydroxy-2-methylbutanenitrile (2-butanone cyanohydrin), but in vitro can also act on 2-hydroxy-2-methylpentanenitrile (2-pentanone cyanohydrin) and mandelonitrile. Is also able to catalyze the reverse reaction in vitro, leading to the stereospecific synthesis of aliphatic, aromatic, and heterocyclic cyanohydrins, important intermediates in the production of various agrochemicals or pharmaceuticals. This chain is (S)-hydroxynitrile lyase, found in Manihot esculenta (Cassava).